We begin with the raw amino-acid sequence, 259 residues long: Protein odd-skipped-related 1 (259 aa).

C2H2-type zinc fingers lie at residues 168–190 (FVCK…ERTH), 196–218 (YTCD…RYIH), and 224–246 (FKCQ…KTLH).

The protein belongs to the Odd C2H2-type zinc-finger protein family. At early gastrula stage, expressed in the involuting mesoderm and endoderm. During neurulation, expressed in the pronephric primordium, following expression of osr2. During tailbud (stage 35), expressed in the rectal diverticulum and in the kidney ducts.

The protein localises to the nucleus. Functionally, transcriptional repressor. Required for pronephric kidney development. This chain is Protein odd-skipped-related 1, found in Xenopus laevis (African clawed frog).